The primary structure comprises 349 residues: S-adenosylmethionine:tRNA ribosyltransferase-isomerase (349 aa).

This sequence belongs to the QueA family. In terms of assembly, monomer.

It is found in the cytoplasm. The enzyme catalyses 7-aminomethyl-7-carbaguanosine(34) in tRNA + S-adenosyl-L-methionine = epoxyqueuosine(34) in tRNA + adenine + L-methionine + 2 H(+). It functions in the pathway tRNA modification; tRNA-queuosine biosynthesis. Its function is as follows. Transfers and isomerizes the ribose moiety from AdoMet to the 7-aminomethyl group of 7-deazaguanine (preQ1-tRNA) to give epoxyqueuosine (oQ-tRNA). The protein is S-adenosylmethionine:tRNA ribosyltransferase-isomerase of Pseudomonas fluorescens (strain SBW25).